Reading from the N-terminus, the 250-residue chain is NADH-quinone oxidoreductase subunit C (250 aa).

It belongs to the complex I 30 kDa subunit family. NDH-1 is composed of 14 different subunits. Subunits NuoB, C, D, E, F, and G constitute the peripheral sector of the complex.

The protein localises to the cell inner membrane. The enzyme catalyses a quinone + NADH + 5 H(+)(in) = a quinol + NAD(+) + 4 H(+)(out). Functionally, NDH-1 shuttles electrons from NADH, via FMN and iron-sulfur (Fe-S) centers, to quinones in the respiratory chain. The immediate electron acceptor for the enzyme in this species is believed to be ubiquinone. Couples the redox reaction to proton translocation (for every two electrons transferred, four hydrogen ions are translocated across the cytoplasmic membrane), and thus conserves the redox energy in a proton gradient. This chain is NADH-quinone oxidoreductase subunit C, found in Xanthomonas oryzae pv. oryzae (strain PXO99A).